The sequence spans 561 residues: Efflux pump bfoC (561 aa).

A disordered region spans residues 1 to 55 (MSDTARILGGPSASSSRDGGMELNSFTEVSQTNSRSHSTKEEEGQVDDQQRPARE). Polar residues predominate over residues 24–36 (NSFTEVSQTNSRS). Basic and acidic residues predominate over residues 38–55 (STKEEEGQVDDQQRPARE). 13 consecutive transmembrane segments (helical) span residues 59–79 (GVLG…CIFC), 103–123 (DVGW…LTFG), 128–148 (FFPI…GSFI), 164–184 (VAGL…SQCV), 194–214 (GFIM…GGAF), 222–242 (WCFY…LFTF), 257–277 (AVGL…CLLL), 293–313 (VVAL…LQLW), 335–355 (LYGF…PIWF), 378–398 (VVFA…GPFM), 425–445 (IGYQ…PIFV), 457–477 (TATA…VSVA), and 530–550 (VHTF…ATVI).

The protein belongs to the major facilitator superfamily. TCR/Tet family.

The protein resides in the cell membrane. Its function is as follows. Efflux pump; part of the gene cluster that mediates the biosynthesis of bifonsecin B, a dimeric gamma-naphthopyrone. This is Efflux pump bfoC from Aspergillus brasiliensis (strain CBS 101740 / IMI 381727 / IBT 21946).